The primary structure comprises 118 residues: Large ribosomal subunit protein uL22 (118 aa).

This sequence belongs to the universal ribosomal protein uL22 family. In terms of assembly, part of the 50S ribosomal subunit.

Its function is as follows. This protein binds specifically to 23S rRNA; its binding is stimulated by other ribosomal proteins, e.g. L4, L17, and L20. It is important during the early stages of 50S assembly. It makes multiple contacts with different domains of the 23S rRNA in the assembled 50S subunit and ribosome. The globular domain of the protein is located near the polypeptide exit tunnel on the outside of the subunit, while an extended beta-hairpin is found that lines the wall of the exit tunnel in the center of the 70S ribosome. The protein is Large ribosomal subunit protein uL22 of Levilactobacillus brevis (strain ATCC 367 / BCRC 12310 / CIP 105137 / JCM 1170 / LMG 11437 / NCIMB 947 / NCTC 947) (Lactobacillus brevis).